The primary structure comprises 167 residues: MAFASASNGAVRFTEEQEALVLKSWAIMKDDSANIGHRFFLKIFEVAPSARHLFSFLRNSDVPLEKNPNLKKHAMAVFVMTCEAAAQLRKTGRVTVRDTTIKRLGSTHFKNGVSDTHFEVARFALLETIKDGIPASMWSPEMKNAWGEAYEHLVAAIKEGMKPVALL.

The 151-residue stretch at 12 to 162 (RFTEEQEALV…LVAAIKEGMK (151 aa)) folds into the Globin domain. Residues 45 to 49 (EVAPS) carry the Homodimerization motif. 5 residues coordinate heme b: Ser55, His73, Arg103, Thr107, and His108. The Homodimerization motif lies at 115 to 127 (DTHFEVARFALLE).

It belongs to the plant globin family. As to quaternary structure, homodimer. It depends on heme b as a cofactor.

It localises to the cytoplasm. It is found in the nucleus. It carries out the reaction Fe(III)-heme b-[protein] + nitric oxide + H2O = Fe(II)-heme b-[protein] + nitrite + 2 H(+). Phytoglobin that reduces nitrite to nitric oxide under anoxic conditions (e.g. during flooding or in waterlogged soil). May not function as an oxygen storage or transport protein. Has an unusually high affinity for O(2) through an hexacoordinate heme iron because of a very low dissociation constant. The polypeptide is Anaerobic nitrite reductase NSHB4 (Oryza sativa subsp. indica (Rice)).